Reading from the N-terminus, the 955-residue chain is RNA polymerase-associated protein RapA (955 aa).

The 171-residue stretch at 163–333 (EVGHRYAPRV…FARLRLLDPE (171 aa)) folds into the Helicase ATP-binding domain. 176–183 (DEVGLGKT) is a binding site for ATP. The DEAH box motif lies at 279–282 (DEAH). Positions 478–642 (RVEWLLELLL…AVRDELFELL (165 aa)) constitute a Helicase C-terminal domain.

This sequence belongs to the SNF2/RAD54 helicase family. RapA subfamily. Interacts with the RNAP. Has a higher affinity for the core RNAP than for the holoenzyme. Its ATPase activity is stimulated by binding to RNAP.

In terms of biological role, transcription regulator that activates transcription by stimulating RNA polymerase (RNAP) recycling in case of stress conditions such as supercoiled DNA or high salt concentrations. Probably acts by releasing the RNAP, when it is trapped or immobilized on tightly supercoiled DNA. Does not activate transcription on linear DNA. Probably not involved in DNA repair. This Aeromonas hydrophila subsp. hydrophila (strain ATCC 7966 / DSM 30187 / BCRC 13018 / CCUG 14551 / JCM 1027 / KCTC 2358 / NCIMB 9240 / NCTC 8049) protein is RNA polymerase-associated protein RapA.